A 373-amino-acid polypeptide reads, in one-letter code: 3-dehydroquinate synthase (373 aa).

NAD(+) is bound by residues 67 to 72 (EGEQAK), 101 to 105 (GVVLD), 125 to 126 (TT), Lys-138, and Lys-147. 3 residues coordinate Zn(2+): Glu-180, His-240, and His-256.

It belongs to the sugar phosphate cyclases superfamily. Dehydroquinate synthase family. NAD(+) serves as cofactor. It depends on Co(2+) as a cofactor. The cofactor is Zn(2+).

It localises to the cytoplasm. The catalysed reaction is 7-phospho-2-dehydro-3-deoxy-D-arabino-heptonate = 3-dehydroquinate + phosphate. The protein operates within metabolic intermediate biosynthesis; chorismate biosynthesis; chorismate from D-erythrose 4-phosphate and phosphoenolpyruvate: step 2/7. Functionally, catalyzes the conversion of 3-deoxy-D-arabino-heptulosonate 7-phosphate (DAHP) to dehydroquinate (DHQ). This is 3-dehydroquinate synthase (aroB) from Chlamydia muridarum (strain MoPn / Nigg).